A 365-amino-acid chain; its full sequence is Carbamoyl phosphate synthase small chain (365 aa).

2 CPSase regions span residues 1 to 166 and 1 to 169; these read MKRQ…PSPG and MKRQ…GRGH. 3 residues coordinate L-glutamine: S45, G218, and G220. The Glutamine amidotransferase type-1 domain maps to 170-357; it reads RVVLVDFGMK…LTMIENFKKE (188 aa). C245 serves as the catalytic Nucleophile. Positions 246, 249, 287, 289, and 290 each coordinate L-glutamine. Active-site residues include H330 and E332.

It belongs to the CarA family. As to quaternary structure, composed of two chains; the small (or glutamine) chain promotes the hydrolysis of glutamine to ammonia, which is used by the large (or ammonia) chain to synthesize carbamoyl phosphate. Tetramer of heterodimers (alpha,beta)4.

It carries out the reaction hydrogencarbonate + L-glutamine + 2 ATP + H2O = carbamoyl phosphate + L-glutamate + 2 ADP + phosphate + 2 H(+). It catalyses the reaction L-glutamine + H2O = L-glutamate + NH4(+). The protein operates within amino-acid biosynthesis; L-arginine biosynthesis; carbamoyl phosphate from bicarbonate: step 1/1. It functions in the pathway pyrimidine metabolism; UMP biosynthesis via de novo pathway; (S)-dihydroorotate from bicarbonate: step 1/3. Its function is as follows. Small subunit of the glutamine-dependent carbamoyl phosphate synthetase (CPSase). CPSase catalyzes the formation of carbamoyl phosphate from the ammonia moiety of glutamine, carbonate, and phosphate donated by ATP, constituting the first step of 2 biosynthetic pathways, one leading to arginine and/or urea and the other to pyrimidine nucleotides. The small subunit (glutamine amidotransferase) binds and cleaves glutamine to supply the large subunit with the substrate ammonia. In Bacillus cereus (strain ZK / E33L), this protein is Carbamoyl phosphate synthase small chain.